The chain runs to 1427 residues: Coiled-coil domain-containing protein 144A (1427 aa).

Basic and acidic residues predominate over residues 1-11 (MASWGGEKRGG). 5 disordered regions span residues 1–32 (MASWGGEKRGGAEGSPKPAVYATRKTPSVGSQ), 87–189 (AARS…LTER), 213–261 (LPEN…CDRE), 453–485 (NMNQNSDSGSTNNYKSLKPKLENLSSLPPDSDR), and 528–586 (EEEM…EVKN). 2 stretches are compositionally biased toward polar residues: residues 129–150 (PESLPQNNNPDWHPTNLTLSDE) and 167–178 (VSPSMPENQSAT). Residues 224-234 (QDSELTSEEEQ) show a composition bias toward acidic residues. The segment covering 453–467 (NMNQNSDSGSTNNYK) has biased composition (polar residues). Positions 490–545 (YLHEELQQDMQKFKNEVNTLEEEFLALKKEDVQLHKDVEEEMEKHRSNSTELSGTL) form a coiled coil. A compositionally biased stretch (basic and acidic residues) spans 528 to 537 (EEEMEKHRSN). The segment covering 543 to 552 (GTLTDGTTVG) has biased composition (low complexity). Over residues 563-584 (PRKENGEHDRPADKTSNEKNEV) the composition is skewed to basic and acidic residues. 2 coiled-coil regions span residues 648–1129 (LLKL…DLTE) and 1155–1309 (FSMK…TQLT).

Belongs to the CCDC144 family.

In terms of biological role, may play a role in preventing the formation of kidney stones through inhibition of calcium oxalate monohydrate (COM) crystallization, attenuating COM-induced apoptotic injury to renal epithelial cells. May exhibit antilithiatic (preventing the formation of kidney stones) activity through crystal binding, hindering the crystal attachment to renal epithelial cells, a pre-requisite to initiate inflammatory response. This chain is Coiled-coil domain-containing protein 144A (CCDC144A), found in Homo sapiens (Human).